We begin with the raw amino-acid sequence, 366 residues long: Probable glucuronokinase 2 (366 aa).

126–136 (PRQTGLSGSSA) contributes to the ATP binding site. Aspartate 179 (proton acceptor) is an active-site residue.

This sequence belongs to the GHMP kinase family. The cofactor is Mg(2+). Requires Mn(2+) as cofactor. Co(2+) is required as a cofactor.

It carries out the reaction D-glucuronate + ATP = 1-phospho-alpha-D-glucuronate + ADP + H(+). Its function is as follows. Sugar-1-kinase with a strict substrate specificity for D-glucuronic acid and ATP. Involved in the biosynthesis of UDP-glucuronic acid (UDP-GlcA), providing nucleotide sugars for cell-wall polymers. May be also involved in a salvage pathway for glucuronic acid. This Arabidopsis thaliana (Mouse-ear cress) protein is Probable glucuronokinase 2 (GLCAK2).